Reading from the N-terminus, the 150-residue chain is Globin-1 (150 aa).

In terms of domain architecture, Globin spans 11–150 (PLSDAEKNKI…MICILLSSAY (140 aa)). Heme b-binding residues include His74 and His106.

The protein belongs to the globin family. In terms of assembly, monomer.

The polypeptide is Globin-1 (Mordacia mordax (Southern hemisphere lamprey)).